A 229-amino-acid chain; its full sequence is Large ribosomal subunit protein uL1 (229 aa).

It belongs to the universal ribosomal protein uL1 family. As to quaternary structure, part of the 50S ribosomal subunit.

Functionally, binds directly to 23S rRNA. The L1 stalk is quite mobile in the ribosome, and is involved in E site tRNA release. In terms of biological role, protein L1 is also a translational repressor protein, it controls the translation of the L11 operon by binding to its mRNA. This Lactococcus lactis subsp. cremoris (strain MG1363) protein is Large ribosomal subunit protein uL1.